A 329-amino-acid chain; its full sequence is Ketol-acid reductoisomerase (NADP(+)) (329 aa).

In terms of domain architecture, KARI N-terminal Rossmann spans 2–182 (TQLFYDTDAD…GGTRAGILET (181 aa)). NADP(+) contacts are provided by residues 25–28 (YGSQ), S51, S53, and 83–86 (DEFQ). H108 is a catalytic residue. G134 is an NADP(+) binding site. The KARI C-terminal knotted domain maps to 183 to 328 (NFKEETETDL…KGLRSMFSWL (146 aa)). D191, E195, E227, and E231 together coordinate Mg(2+). Substrate is bound at residue S252.

This sequence belongs to the ketol-acid reductoisomerase family. It depends on Mg(2+) as a cofactor.

It catalyses the reaction (2R)-2,3-dihydroxy-3-methylbutanoate + NADP(+) = (2S)-2-acetolactate + NADPH + H(+). The catalysed reaction is (2R,3R)-2,3-dihydroxy-3-methylpentanoate + NADP(+) = (S)-2-ethyl-2-hydroxy-3-oxobutanoate + NADPH + H(+). It participates in amino-acid biosynthesis; L-isoleucine biosynthesis; L-isoleucine from 2-oxobutanoate: step 2/4. The protein operates within amino-acid biosynthesis; L-valine biosynthesis; L-valine from pyruvate: step 2/4. Its function is as follows. Involved in the biosynthesis of branched-chain amino acids (BCAA). Catalyzes an alkyl-migration followed by a ketol-acid reduction of (S)-2-acetolactate (S2AL) to yield (R)-2,3-dihydroxy-isovalerate. In the isomerase reaction, S2AL is rearranged via a Mg-dependent methyl migration to produce 3-hydroxy-3-methyl-2-ketobutyrate (HMKB). In the reductase reaction, this 2-ketoacid undergoes a metal-dependent reduction by NADPH to yield (R)-2,3-dihydroxy-isovalerate. This chain is Ketol-acid reductoisomerase (NADP(+)), found in Prochlorococcus marinus (strain MIT 9215).